Consider the following 172-residue polypeptide: HAD-like hydrolase superfamily protein P8B7.31 (172 aa).

Catalysis depends on Asp-14, which acts as the Nucleophile. Mg(2+)-binding residues include Asp-14, Asp-16, and Asp-137. Asp-16 acts as the Proton donor in catalysis.

This sequence belongs to the HAD-like hydrolase superfamily.

The protein resides in the cytoplasm. Its subcellular location is the nucleus. The protein is HAD-like hydrolase superfamily protein P8B7.31 of Schizosaccharomyces pombe (strain 972 / ATCC 24843) (Fission yeast).